Consider the following 101-residue polypeptide: Small ribosomal subunit protein uS10 (101 aa).

This sequence belongs to the universal ribosomal protein uS10 family. Part of the 30S ribosomal subunit.

Functionally, involved in the binding of tRNA to the ribosomes. This chain is Small ribosomal subunit protein uS10, found in Rhodococcus erythropolis (strain PR4 / NBRC 100887).